We begin with the raw amino-acid sequence, 459 residues long: MIKDPFARLGLDREVLTVSQLNGRARVLLEDVFSNIWVEGEISNLARPASGHVYFTLKDSGAQVRCALFRQNAARVRQALKDGLAVKVRGKVSLFEGRGDYQLILDTVEPAGDGALRLAFDALKEKLSAEGLFSAERKVPLPAHPQRIGIISSPTGAVIRDIISVFRRRAPQVQLTLIPTAVQGREATAQIVRALKLADARGFDALILARGGGSLEDLWCFNEEAVARAVDACVTPIVSAVGHETDVSISDFVADVRAPTPSAAAELLAPDSSHLIRQVESLHRRLVMRMRDRLMRDRLRLEGMTRRLRHPGERLRQQAQRLDDLDMRMRRAFERQLNTRRERLIRLETRLAGQHPGRQLALLRQRLDSLAERLPRAMNEGLKRRRLQLQSQMQTLHVVSPLATLGRGYSILLDERGNAIRNAAQTHTGQRLKARLGEGELQVRVEDNHLTPVTLSLLD.

The protein belongs to the XseA family. As to quaternary structure, heterooligomer composed of large and small subunits.

The protein resides in the cytoplasm. The catalysed reaction is Exonucleolytic cleavage in either 5'- to 3'- or 3'- to 5'-direction to yield nucleoside 5'-phosphates.. Bidirectionally degrades single-stranded DNA into large acid-insoluble oligonucleotides, which are then degraded further into small acid-soluble oligonucleotides. The sequence is that of Exodeoxyribonuclease 7 large subunit from Pseudomonas fluorescens (strain Pf0-1).